The chain runs to 123 residues: Small ribosomal subunit protein uS12 (123 aa).

Residues 9–28 (RNGRKRATKKTTTPALKGAP) are disordered. Residues 18–27 (KTTTPALKGA) are compositionally biased toward low complexity. Aspartate 89 carries the 3-methylthioaspartic acid modification.

The protein belongs to the universal ribosomal protein uS12 family. Part of the 30S ribosomal subunit. Contacts proteins S8 and S17. May interact with IF1 in the 30S initiation complex.

Its function is as follows. With S4 and S5 plays an important role in translational accuracy. In terms of biological role, interacts with and stabilizes bases of the 16S rRNA that are involved in tRNA selection in the A site and with the mRNA backbone. Located at the interface of the 30S and 50S subunits, it traverses the body of the 30S subunit contacting proteins on the other side and probably holding the rRNA structure together. The combined cluster of proteins S8, S12 and S17 appears to hold together the shoulder and platform of the 30S subunit. The chain is Small ribosomal subunit protein uS12 from Desulfosudis oleivorans (strain DSM 6200 / JCM 39069 / Hxd3) (Desulfococcus oleovorans).